The following is a 317-amino-acid chain: Acetyl-coenzyme A carboxylase carboxyl transferase subunit alpha (317 aa).

The CoA carboxyltransferase C-terminal domain maps to 39-293 (KLEDKNRKLT…KDALGASLER (255 aa)).

This sequence belongs to the AccA family. In terms of assembly, acetyl-CoA carboxylase is a heterohexamer composed of biotin carboxyl carrier protein (AccB), biotin carboxylase (AccC) and two subunits each of ACCase subunit alpha (AccA) and ACCase subunit beta (AccD).

The protein localises to the cytoplasm. It catalyses the reaction N(6)-carboxybiotinyl-L-lysyl-[protein] + acetyl-CoA = N(6)-biotinyl-L-lysyl-[protein] + malonyl-CoA. It functions in the pathway lipid metabolism; malonyl-CoA biosynthesis; malonyl-CoA from acetyl-CoA: step 1/1. Component of the acetyl coenzyme A carboxylase (ACC) complex. First, biotin carboxylase catalyzes the carboxylation of biotin on its carrier protein (BCCP) and then the CO(2) group is transferred by the carboxyltransferase to acetyl-CoA to form malonyl-CoA. This chain is Acetyl-coenzyme A carboxylase carboxyl transferase subunit alpha, found in Chromohalobacter salexigens (strain ATCC BAA-138 / DSM 3043 / CIP 106854 / NCIMB 13768 / 1H11).